We begin with the raw amino-acid sequence, 276 residues long: NH(3)-dependent NAD(+) synthetase (276 aa).

43–50 (GISGGVDS) contacts ATP. Position 49 (Asp-49) interacts with Mg(2+). Arg-146 contacts deamido-NAD(+). An ATP-binding site is contributed by Thr-166. Residue Glu-171 participates in Mg(2+) binding. Residues Lys-179 and Asp-186 each coordinate deamido-NAD(+). Residues Lys-195 and Thr-217 each contribute to the ATP site. Residue 266 to 267 (HK) participates in deamido-NAD(+) binding.

This sequence belongs to the NAD synthetase family. In terms of assembly, homodimer.

It catalyses the reaction deamido-NAD(+) + NH4(+) + ATP = AMP + diphosphate + NAD(+) + H(+). It participates in cofactor biosynthesis; NAD(+) biosynthesis; NAD(+) from deamido-NAD(+) (ammonia route): step 1/1. In terms of biological role, catalyzes the ATP-dependent amidation of deamido-NAD to form NAD. Uses ammonia as a nitrogen source. This Shewanella frigidimarina (strain NCIMB 400) protein is NH(3)-dependent NAD(+) synthetase.